The chain runs to 1030 residues: Calcium-transporting ATPase 4, plasma membrane-type (1030 aa).

At 1 to 157 the chain is on the cytoplasmic side; the sequence is MSNLLRDFEV…NRYTEKPARS (157 aa). Residues 19–30 are interaction with calmodulin; it reads ARQRWRSSVSIV. At Ser28 the chain carries Phosphoserine. Residues 158 to 178 form a helical membrane-spanning segment; the sequence is FLMFVWEALHDITLIILMVCA. Topologically, residues 179–196 are lumenal; it reads VVSIGVGVATEGFPRGMY. A helical membrane pass occupies residues 197 to 217; that stretch reads DGTGILLSILLVVMVTAISDY. Topologically, residues 218–345 are cytoplasmic; sequence KQSLQFRDLD…EDETPLQVKL (128 aa). Residues 346-365 traverse the membrane as a helical segment; that stretch reads NGVATIIGKIGLSFAVLTFV. Topologically, residues 366-395 are lumenal; the sequence is VLCIRFVLDKATSGSFTNWSSEDALTLLDY. A helical membrane pass occupies residues 396–413; it reads FAISVTIIVVAVPEGLPL. At 414–804 the chain is on the cytoplasmic side; the sequence is AVTLSLAFAM…RWGRAVYINI (391 aa). Catalysis depends on Asp451, which acts as the 4-aspartylphosphate intermediate. 2 residues coordinate Mg(2+): Asp749 and Asp753. A helical membrane pass occupies residues 805-823; that stretch reads QKFVQFQLTVNVVALIINF. At 824-834 the chain is on the lumenal side; the sequence is VSACITGSAPL. A helical membrane pass occupies residues 835–855; sequence TAVQLLWVNMIMDTLGALALA. Topologically, residues 856-875 are cytoplasmic; it reads TEPPNEGLMKRAPIARTASF. Residues 876–898 form a helical membrane-spanning segment; it reads ITKTMWRNIAGQSVYQLIVLGIL. Residues 899 to 910 are Lumenal-facing; the sequence is NFAGKSLLKLDG. The chain crosses the membrane as a helical span at residues 911 to 932; that stretch reads PDSTAVLNTVIFNSFVFCQVFN. At 933 to 950 the chain is on the cytoplasmic side; the sequence is EINSREIEKINVFKGMFN. The chain crosses the membrane as a helical span at residues 951-972; it reads SWVFTWVMTVTVVFQVIIVEFL. The Lumenal segment spans residues 973–982; sequence GAFASTVPLS. A helical membrane pass occupies residues 983–1004; the sequence is WQHWLLSILIGSLNMIVAVILK. Over 1005-1030 the chain is Cytoplasmic; that stretch reads CVPVESRHHHDGYDLLPSGPSSSNSA.

This sequence belongs to the cation transport ATPase (P-type) (TC 3.A.3) family. Type IIB subfamily.

The protein localises to the vacuole membrane. The enzyme catalyses Ca(2+)(in) + ATP + H2O = Ca(2+)(out) + ADP + phosphate + H(+). With respect to regulation, activated by calmodulin. Its function is as follows. This magnesium-dependent enzyme catalyzes the hydrolysis of ATP coupled with the translocation of calcium from the cytosol into small vacuoles. This chain is Calcium-transporting ATPase 4, plasma membrane-type (ACA4), found in Arabidopsis thaliana (Mouse-ear cress).